A 394-amino-acid chain; its full sequence is Penicillopepsin-3 (394 aa).

An N-terminal signal peptide occupies residues 1–20 (MVSFTQLQLAFLGLSALGAA). A propeptide spans 21-70 (VPVTGTSEKKTFSLNQVKVAGTKTKNPAEHYANALRKYGAEVPSHVLAAA) (activation peptide). Positions 87 to 392 (YLTPIDVGGT…DASGPRLGFA (306 aa)) constitute a Peptidase A1 domain. Catalysis depends on residues aspartate 103 and aspartate 284. A disulfide bridge connects residues cysteine 320 and cysteine 355.

This sequence belongs to the peptidase A1 family. As to quaternary structure, monomer.

The protein localises to the secreted. It carries out the reaction Hydrolysis of proteins with broad specificity similar to that of pepsin A, preferring hydrophobic residues at P1 and P1', but also cleaving 20-Gly-|-Glu-21 in the B chain of insulin. Clots milk, and activates trypsinogen.. Its function is as follows. Secreted aspartic endopeptidase that allows assimilation of proteinaceous substrates. The scissile peptide bond is attacked by a nucleophilic water molecule activated by two aspartic residues in the active site. Shows a broad primary substrate specificity. Favors hydrophobic residues at the P1 and P1' positions, but can also activate trypsinogen and hydrolyze the B chain of insulin between positions 'Gly-20' and 'Glu-21'. The chain is Penicillopepsin-3 from Penicillium janthinellum (Penicillium vitale).